Reading from the N-terminus, the 124-residue chain is Small ribosomal subunit protein uS10z/uS10x (124 aa).

The protein belongs to the universal ribosomal protein uS10 family.

The chain is Small ribosomal subunit protein uS10z/uS10x (RPS20A) from Arabidopsis thaliana (Mouse-ear cress).